The chain runs to 823 residues: ATM interactor (823 aa).

Residues 28–67 form a disordered region; sequence GAAAAASGPWVPPGPRLRGSRPRPAGATQQPAVPAPPAGE. Residues 49–59 show a composition bias toward low complexity; sequence PRPAGATQQPA. Residues 84–109 form a C2H2-type 1 zinc finger; that stretch reads ILCTVRGCGKILPNSPALNMHLVKSH. The segment at 165–184 adopts a C2H2-type 2; degenerate zinc-finger fold; the sequence is HKCSKCSNSYGTEWDLKRHA. Basic and acidic residues predominate over residues 214 to 225; the sequence is HEIPAEHRDPPS. Disordered regions lie at residues 214–234, 268–289, and 610–634; these read HEIPAEHRDPPSKKRKMENCA, EPSFEDSCGSNTDKQTLTTPPR, and RSLLSDTNPGPDTQLPSGPAQNPGI. A required for formation of RAD51 foci region spans residues 223 to 442; the sequence is PPSKKRKMEN…ADSSVSSCSQ (220 aa). Polar residues-rich tracts occupy residues 275 to 286 and 613 to 629; these read CGSNTDKQTLTT and LSDTNPGPDTQLPSGPA.

As to quaternary structure, interacts via its C-terminus with ATM. Interacts with DYNLL1; this interaction inhibits ATMIN transcriptional activity and hence may play a role in a feedback loop whereby DYNLL1 inhibits transactivation of its own promoter by ATMIN. As to expression, ubiquitously expressed in normal tissues and cancer cell lines with highest levels in placenta and skeletal muscle.

It localises to the nucleus. In terms of biological role, transcription factor. Plays a crucial role in cell survival and RAD51 foci formation in response to methylating DNA damage. Involved in regulating the activity of ATM in the absence of DNA damage. May play a role in stabilizing ATM. Binds to the DYNLL1 promoter and activates its transcription. This is ATM interactor (ATMIN) from Homo sapiens (Human).